The sequence spans 656 residues: Vacuolar amino acid transporter 3 (656 aa).

Positions 1–109 (MSNSQSIKIK…VPSTSEDPDV (109 aa)) are disordered. Polar residues predominate over residues 15 to 28 (NENFASGSYSSRRS). Phosphoserine occurs at positions 37 and 53. Over residues 50–71 (ISPSESNLPNNVAENTTDTPVN) the composition is skewed to polar residues. Basic and acidic residues predominate over residues 75-97 (IRDENHNSRKGKDVTLNSDEAHS). A Phosphoserine modification is found at Ser-172. The next 11 helical transmembrane spans lie at 280 to 300 (AVLL…PKAF), 307 to 327 (FSSA…LLLI), 351 to 371 (FAIL…YISF), 389 to 409 (EYHL…LSLV), 419 to 439 (ALIA…WDVI), 457 to 477 (FSLF…ILPI), 494 to 514 (VMAA…AAFG), 537 to 557 (LYAI…IAII), 578 to 598 (YLRV…SSRL), 601 to 621 (FVSM…PPML), and 636 to 656 (DIFM…MTFF).

The protein belongs to the amino acid/polyamine transporter 2 family.

The protein localises to the endoplasmic reticulum membrane. The protein resides in the vacuole membrane. Involved in amino acid efflux from the vacuole to the cytoplasm. Capable of transporting large neutral amino acids including tyrosine, glutamine, asparagine, isoleucine and leucine. Required for spore formation. In Schizosaccharomyces pombe (strain 972 / ATCC 24843) (Fission yeast), this protein is Vacuolar amino acid transporter 3 (avt3).